Consider the following 254-residue polypeptide: Phycobilisome rod-core linker polypeptide CpcG3 (254 aa).

Residues Ser11–Lys191 form the PBS-linker domain.

The protein belongs to the phycobilisome linker protein family. The phycobilisome is a hemidiscoidal structure that is composed of two distinct substructures: a core complex and a number of rods radiating from the core.

It localises to the cellular thylakoid membrane. Functionally, rod-core linker protein required for attachment of phycocyanin to allophycocyanin in cores of phycobilisomes. In terms of biological role, linker polypeptides determine the state of aggregation and the location of the disk-shaped phycobiliprotein units within the phycobilisome and modulate their spectroscopic properties in order to mediate a directed and optimal energy transfer. This chain is Phycobilisome rod-core linker polypeptide CpcG3 (cpcG3), found in Mastigocladus laminosus (Fischerella sp.).